The following is a 125-amino-acid chain: Protein sigma-1-small (125 aa).

This sequence belongs to the orthoreovirus sigma-1s protein family.

The chain is Protein sigma-1-small (S1) from Mammalia (T2J).